We begin with the raw amino-acid sequence, 110 residues long: MFINGFVNYPVRTPPNDLLQVVLHGFLRCPLDGSQVDSIGIGHTVHGIVLPGKWVVLMCVLSFLEPPSRRYTFCEADLPYTKITARKAERPSQGGKDYNGTAKSAQSTTV.

The disordered stretch occupies residues 85-110 (ARKAERPSQGGKDYNGTAKSAQSTTV). The segment covering 101–110 (TAKSAQSTTV) has biased composition (polar residues).

This is an uncharacterized protein from Saccharomyces cerevisiae (strain ATCC 204508 / S288c) (Baker's yeast).